Here is a 440-residue protein sequence, read N- to C-terminus: GTPase Der (440 aa).

2 EngA-type G domains span residues 4-168 and 177-352; these read PIVA…PENK and IKVA…NQRA. Residues 10-17, 57-61, 120-123, 183-190, 230-234, and 295-298 each bind GTP; these read GRPNVGKS, DTGGI, NKVD, GKPNVGKS, DTAGL, and NKWD. Residues 353 to 437 form the KH-like domain; that stretch reads MRVPTGGLNE…PIRFIYREKS (85 aa).

Belongs to the TRAFAC class TrmE-Era-EngA-EngB-Septin-like GTPase superfamily. EngA (Der) GTPase family. In terms of assembly, associates with the 50S ribosomal subunit.

Functionally, GTPase that plays an essential role in the late steps of ribosome biogenesis. The polypeptide is GTPase Der (Alkaliphilus metalliredigens (strain QYMF)).